We begin with the raw amino-acid sequence, 117 residues long: NADH-ubiquinone oxidoreductase chain 3 (117 aa).

3 helical membrane-spanning segments follow: residues 1–21 (MKFIFMYFIFIILISSILLLL), 58–78 (FLMTMMFLIFDVEIILFLPII), and 86–106 (TMISYLMISIFLILLITTLIL).

Belongs to the complex I subunit 3 family.

It localises to the mitochondrion membrane. The catalysed reaction is a ubiquinone + NADH + 5 H(+)(in) = a ubiquinol + NAD(+) + 4 H(+)(out). Its function is as follows. Core subunit of the mitochondrial membrane respiratory chain NADH dehydrogenase (Complex I) that is believed to belong to the minimal assembly required for catalysis. Complex I functions in the transfer of electrons from NADH to the respiratory chain. The immediate electron acceptor for the enzyme is believed to be ubiquinone. The sequence is that of NADH-ubiquinone oxidoreductase chain 3 (ND3) from Apis mellifera ligustica (Common honeybee).